The sequence spans 161 residues: MNIRIGHGFDVHKFGGGSPLLLGGVHIPYETGLIAHSDGDVVLHAISDAVLGAVALGDIGKHFPDTDEEFKGADSRHLLRHCYRLAKEKGYSMGNLDVTIIAQAPKMAPHIEAIREVLALDFETDTDNINVKATTTEKLGFTGRKEGIAVEAVVLLVKSAD.

Residues Asp10 and His12 each contribute to the a divalent metal cation site. 4-CDP-2-C-methyl-D-erythritol 2-phosphate contacts are provided by residues 10–12 and 36–37; these read DVH and HS. A divalent metal cation is bound at residue His44. 4-CDP-2-C-methyl-D-erythritol 2-phosphate contacts are provided by residues 58–60, 63–67, 102–108, 134–137, Phe141, and Arg144; these read DIG, FPDTD, AQAPKMA, and TTTE.

Belongs to the IspF family. Homotrimer. Requires a divalent metal cation as cofactor.

The catalysed reaction is 4-CDP-2-C-methyl-D-erythritol 2-phosphate = 2-C-methyl-D-erythritol 2,4-cyclic diphosphate + CMP. The protein operates within isoprenoid biosynthesis; isopentenyl diphosphate biosynthesis via DXP pathway; isopentenyl diphosphate from 1-deoxy-D-xylulose 5-phosphate: step 4/6. In terms of biological role, involved in the biosynthesis of isopentenyl diphosphate (IPP) and dimethylallyl diphosphate (DMAPP), two major building blocks of isoprenoid compounds. Catalyzes the conversion of 4-diphosphocytidyl-2-C-methyl-D-erythritol 2-phosphate (CDP-ME2P) to 2-C-methyl-D-erythritol 2,4-cyclodiphosphate (ME-CPP) with a corresponding release of cytidine 5-monophosphate (CMP). This chain is 2-C-methyl-D-erythritol 2,4-cyclodiphosphate synthase, found in Shewanella sediminis (strain HAW-EB3).